A 346-amino-acid polypeptide reads, in one-letter code: 3-isopropylmalate dehydrogenase (346 aa).

Residue 76 to 87 participates in NAD(+) binding; sequence GPKWTDPNNRPE. 4 residues coordinate substrate: Arg94, Arg104, Arg132, and Asp217. Residues Asp217, Asp241, and Asp245 each coordinate Mg(2+). Position 275–287 (275–287) interacts with NAD(+); that stretch reads GSAPDIANQDIAN.

Belongs to the isocitrate and isopropylmalate dehydrogenases family. LeuB type 1 subfamily. As to quaternary structure, homodimer. Requires Mg(2+) as cofactor. Mn(2+) is required as a cofactor.

The protein localises to the cytoplasm. The enzyme catalyses (2R,3S)-3-isopropylmalate + NAD(+) = 4-methyl-2-oxopentanoate + CO2 + NADH. The protein operates within amino-acid biosynthesis; L-leucine biosynthesis; L-leucine from 3-methyl-2-oxobutanoate: step 3/4. Functionally, catalyzes the oxidation of 3-carboxy-2-hydroxy-4-methylpentanoate (3-isopropylmalate) to 3-carboxy-4-methyl-2-oxopentanoate. The product decarboxylates to 4-methyl-2 oxopentanoate. This chain is 3-isopropylmalate dehydrogenase, found in Staphylococcus saprophyticus subsp. saprophyticus (strain ATCC 15305 / DSM 20229 / NCIMB 8711 / NCTC 7292 / S-41).